Reading from the N-terminus, the 479-residue chain is Small ribosomal subunit protein bS1 (479 aa).

S1 motif domains are found at residues 36–105, 123–188, 209–277, and 294–363; these read GDIV…LSKK, DEAV…LSRR, GAIR…LSLK, and GQIV…LSLK. A disordered region spans residues 429–466; the sequence is TAQMEKFAAAEAEAANAPVSNGSSRSEESSGGTLASDA. Residues 437 to 460 show a composition bias toward low complexity; the sequence is AAEAEAANAPVSNGSSRSEESSGG.

The protein belongs to the bacterial ribosomal protein bS1 family. Binds uncharacterized protein MSMEG_2731/MSMEI_2664.

Functionally, binds mRNA, facilitating recognition of most mRNAs by the 30S ribosomal subunit during translation initiation. Plays a role in trans-translation; binds tmRNA (the product of the ssrA gene). Binds very poorly to pyrazinoic acid (POA), the active form of the prodrug pyrazinamide (PZA); POA does not disrupt trans-translation in this organism. M.smegmatis is resistant to the antibiotic PZA. In trans-translation Ala-aminoacylated transfer-messenger RNA (tmRNA, product of the ssrA gene; the 2 termini fold to resemble tRNA(Ala) while it encodes a short internal open reading frame (the tag peptide)) acts like a tRNA, entering the A-site of the ribosome and displacing the stalled mRNA (which is subsequently degraded). The ribosome then switches to translate the ORF on the tmRNA, the nascent peptide is terminated with the 'tag peptide' encoded by the tmRNA and thus targeted for degradation. This Mycolicibacterium smegmatis (strain ATCC 700084 / mc(2)155) (Mycobacterium smegmatis) protein is Small ribosomal subunit protein bS1 (rpsA).